A 359-amino-acid chain; its full sequence is Magnesium transporter NIPA2 (359 aa).

Topologically, residues 1–9 (MSLGRGKYD) are extracellular. Residues 10 to 30 (FYIGLGLAMTSSIFIGGSFIL) form a helical membrane-spanning segment. At 31–56 (KKKGLLRLARKGSMRAGQGGHAYLKE) the chain is on the cytoplasmic side. The helical transmembrane segment at 57–77 (WLWWAGLLSMGAGEVANFAAY) threads the bilayer. Residue Ala-78 is a topological domain, extracellular. The helical transmembrane segment at 79–99 (FAPATLVTPLGALSVLVSAIL) threads the bilayer. Residues 100-107 (SSYFLNER) lie on the Cytoplasmic side of the membrane. The chain crosses the membrane as a helical span at residues 108–128 (LNLHGKIGCLLSILGSTVMVI). Topologically, residues 129-149 (HAPKEEEIETLNEMSHKLGDP) are extracellular. Residues 150 to 170 (GFVVFATFVVIVALIFIFVVG) form a helical membrane-spanning segment. The Cytoplasmic portion of the chain corresponds to 171-175 (PRHGQ). Residues 176–196 (TNILVYITICSVIGAFSVSCV) traverse the membrane as a helical segment. The Extracellular portion of the chain corresponds to 197–215 (KGLGIAIKELLAGKPVLQH). The chain crosses the membrane as a helical span at residues 216-236 (PLAWILLFSLVVCVSTQINYL). The Cytoplasmic segment spans residues 237 to 246 (NRALDIFNTS). Residues 247–267 (IVTPIYYVFFTTSVLTCSAIL) form a helical membrane-spanning segment. Over 268–278 (FKEWQDMPVDD) the chain is Extracellular. The chain crosses the membrane as a helical span at residues 279–299 (VIGTLSGFFTIIVGIFLLHAF). Topologically, residues 300-359 (KDVSFSLASLPVSFRKDEKAMNGNLSSMYEVLNNNEDDLPCGIEHTGENISRRNGNLPSF) are cytoplasmic.

It belongs to the NIPA family. In terms of tissue distribution, widely expressed. Expressed at high levels in the kidney.

Its subcellular location is the cell membrane. The protein resides in the early endosome. It carries out the reaction Mg(2+)(in) = Mg(2+)(out). Its function is as follows. Acts as a selective Mg(2+) transporter. The polypeptide is Magnesium transporter NIPA2 (Nipa2) (Mus musculus (Mouse)).